The primary structure comprises 853 residues: NADH-quinone oxidoreductase subunit G 2 (853 aa).

Positions 1-78 (MIKVTIDEQS…GMVVRTNTPL (78 aa)) constitute a 2Fe-2S ferredoxin-type domain. Positions 34, 45, 48, and 62 each coordinate [2Fe-2S] cluster. In terms of domain architecture, 4Fe-4S His(Cys)3-ligated-type spans 78 to 117 (LIEETRSSMLDMLLANHPLDCPICDKGGECELQDMVMAYG). 12 residues coordinate [4Fe-4S] cluster: H94, C98, C101, C107, C148, C151, C154, C198, C224, C227, C231, and C259. 2 consecutive 4Fe-4S ferredoxin-type domains span residues 139-170 (PVIIMNVNRCIQCQRCVRMCEEVVGAVALGTV) and 179-209 (TGFEGSLASCDQCGNCVEVCPVGALMSFPYR). Residues 217–273 (LAETDTICPHCGTGCQLTVGARKGEFMRVRSDWEHGVNRETLCVRGRFGLDFIESRD) form the 4Fe-4S Mo/W bis-MGD-type domain.

The protein belongs to the complex I 75 kDa subunit family. [2Fe-2S] cluster serves as cofactor. The cofactor is [4Fe-4S] cluster.

The enzyme catalyses a quinone + NADH + 5 H(+)(in) = a quinol + NAD(+) + 4 H(+)(out). Functionally, NDH-1 shuttles electrons from NADH, via FMN and iron-sulfur (Fe-S) centers, to quinones in the respiratory chain. The immediate electron acceptor for the enzyme in this species is believed to be ubiquinone. Couples the redox reaction to proton translocation (for every two electrons transferred, four hydrogen ions are translocated across the cytoplasmic membrane), and thus conserves the redox energy in a proton gradient. In Rhizobium meliloti (strain 1021) (Ensifer meliloti), this protein is NADH-quinone oxidoreductase subunit G 2 (nuoG2).